A 57-amino-acid chain; its full sequence is Small ribosomal subunit protein eS31 (57 aa).

Zn(2+) is bound by residues cysteine 29, cysteine 32, cysteine 47, and cysteine 50. The C4-type zinc-finger motif lies at 29–50 (CPRCGPGVFMANHKDRWSCGRC).

This sequence belongs to the eukaryotic ribosomal protein eS31 family. Part of the 30S ribosomal subunit. Zn(2+) is required as a cofactor.

This Thermococcus kodakarensis (strain ATCC BAA-918 / JCM 12380 / KOD1) (Pyrococcus kodakaraensis (strain KOD1)) protein is Small ribosomal subunit protein eS31.